Consider the following 658-residue polypeptide: Translin-associated factor X-interacting protein 1 (658 aa).

Coiled coils occupy residues 144 to 184 and 230 to 295; these read EISL…AEEY and ALKM…LMQL.

Interacts with TSNAX.

It is found in the cytoplasm. The protein resides in the perinuclear region. Possible role in spermatogenesis. This Homo sapiens (Human) protein is Translin-associated factor X-interacting protein 1.